The chain runs to 1015 residues: Cytosolic carboxypeptidase 1 (1015 aa).

A disordered region spans residues 384 to 462 (LPTATPSTPG…GALPKTTRLN (79 aa)). Positions 416-451 (EDGMDEEDEAFVRDDDDEGKDDRGSDDDDGKDDDEI) are enriched in acidic residues. Positions 727–1013 (YPYTYSFLNS…DLLHSFLEMT (287 aa)) constitute a Peptidase M14 domain. Residues His792, Glu795, and His891 each contribute to the Zn(2+) site. Glu977 acts as the Proton donor/acceptor in catalysis.

Belongs to the peptidase M14 family. Zn(2+) is required as a cofactor. In hermaphrodites and males, expressed in amphid and IL2 ciliated sensory neurons. In males, expressed in CEM head neurons, RnB and HOB tail neurons, and in gubernacular erector and retractor muscles.

It localises to the perikaryon. The protein localises to the cell projection. The protein resides in the cilium. Its subcellular location is the dendrite. Catalyzes the deglutamylation of polyglutamate side chains generated by post-translational polyglutamylation of proteins such as tubulins. Via the deglutamylation of tubulin, regulates the localization and velocity of kinesin motors and the structural integrity of microtubules in sensory cilia. In male CEM sensory neurons, regulates the cilia release of bioactive extracellular vesicles. Also regulates microtubule dynamics in uterine muscle cells. In Caenorhabditis elegans, this protein is Cytosolic carboxypeptidase 1.